Reading from the N-terminus, the 205-residue chain is Urease accessory protein UreG (205 aa).

Glycine 14 to threonine 21 serves as a coordination point for GTP.

Belongs to the SIMIBI class G3E GTPase family. UreG subfamily. In terms of assembly, homodimer. UreD, UreF and UreG form a complex that acts as a GTP-hydrolysis-dependent molecular chaperone, activating the urease apoprotein by helping to assemble the nickel containing metallocenter of UreC. The UreE protein probably delivers the nickel.

The protein localises to the cytoplasm. Its function is as follows. Facilitates the functional incorporation of the urease nickel metallocenter. This process requires GTP hydrolysis, probably effectuated by UreG. The chain is Urease accessory protein UreG from Proteus mirabilis (strain HI4320).